Consider the following 37-residue polypeptide: Islet amyloid polypeptide (37 aa).

A disulfide bridge links C2 with C7. Residue Y37 is modified to Tyrosine amide.

Belongs to the calcitonin family. In terms of assembly, can form homodimers. Interacts with IDE and INS. Interaction with INS inhibits homodimerization and fibril formation.

Its subcellular location is the secreted. Amylin/IAPP is a glucoregulatory peptide hormone that plays an important role in the regulation of energy homeostasis. Selectively inhibits insulin-stimulated glucose utilization and glycogen deposition in muscle, while not affecting adipocyte glucose metabolism. IAPP function is mediated by the CALCR-RAMPs (AMYRs) receptor complexes. Amylin can also bind CALCR receptor in the absence of RAMPs, although it is more selective for AMYRs. The protein is Islet amyloid polypeptide (IAPP) of Cricetulus griseus (Chinese hamster).